Consider the following 318-residue polypeptide: Transaldolase (318 aa).

Residue lysine 132 is the Schiff-base intermediate with substrate of the active site.

It belongs to the transaldolase family. Type 1 subfamily. In terms of assembly, homodimer.

Its subcellular location is the cytoplasm. It carries out the reaction D-sedoheptulose 7-phosphate + D-glyceraldehyde 3-phosphate = D-erythrose 4-phosphate + beta-D-fructose 6-phosphate. It functions in the pathway carbohydrate degradation; pentose phosphate pathway; D-glyceraldehyde 3-phosphate and beta-D-fructose 6-phosphate from D-ribose 5-phosphate and D-xylulose 5-phosphate (non-oxidative stage): step 2/3. Its function is as follows. Transaldolase is important for the balance of metabolites in the pentose-phosphate pathway. The polypeptide is Transaldolase (Shewanella oneidensis (strain ATCC 700550 / JCM 31522 / CIP 106686 / LMG 19005 / NCIMB 14063 / MR-1)).